The chain runs to 164 residues: Ubiquitin-conjugating enzyme E2 2 (164 aa).

The UBC core domain maps to 4 to 150 (PARRRLMRDF…VKETVEKSWE (147 aa)). Residue cysteine 88 is the Glycyl thioester intermediate of the active site.

The protein belongs to the ubiquitin-conjugating enzyme family.

The protein resides in the cytoplasm. Its subcellular location is the nucleus. It catalyses the reaction S-ubiquitinyl-[E1 ubiquitin-activating enzyme]-L-cysteine + [E2 ubiquitin-conjugating enzyme]-L-cysteine = [E1 ubiquitin-activating enzyme]-L-cysteine + S-ubiquitinyl-[E2 ubiquitin-conjugating enzyme]-L-cysteine.. It functions in the pathway protein modification; protein ubiquitination. Its function is as follows. Catalyzes the covalent attachment of ubiquitin to other proteins. Plays a role in transcription regulation by catalyzing the monoubiquitination of histone H2B to form H2BK123ub1. H2BK123ub1 gives a specific tag for epigenetic transcriptional activation and is also a prerequisite for H3K4me and H3K79me formation. Also involved in postreplication repair of UV-damaged DNA, in N-end rule-dependent protein degradation and in sporulation. In Kluyveromyces lactis (strain ATCC 8585 / CBS 2359 / DSM 70799 / NBRC 1267 / NRRL Y-1140 / WM37) (Yeast), this protein is Ubiquitin-conjugating enzyme E2 2 (UBC2).